We begin with the raw amino-acid sequence, 238 residues long: Ribonuclease PH (238 aa).

Residues arginine 86 and 124–126 (GTR) contribute to the phosphate site.

Belongs to the RNase PH family. As to quaternary structure, homohexameric ring arranged as a trimer of dimers.

The catalysed reaction is tRNA(n+1) + phosphate = tRNA(n) + a ribonucleoside 5'-diphosphate. Functionally, phosphorolytic 3'-5' exoribonuclease that plays an important role in tRNA 3'-end maturation. Removes nucleotide residues following the 3'-CCA terminus of tRNAs; can also add nucleotides to the ends of RNA molecules by using nucleoside diphosphates as substrates, but this may not be physiologically important. Probably plays a role in initiation of 16S rRNA degradation (leading to ribosome degradation) during starvation. The sequence is that of Ribonuclease PH from Dichelobacter nodosus (strain VCS1703A).